The chain runs to 225 residues: Cytochrome c oxidase subunit 2 (225 aa).

The Mitochondrial intermembrane segment spans residues 1–25 (MSTWFMFMFQESNSYYADNLISFHN). The helical transmembrane segment at 26–47 (MVMMIIIMISTLTVYIILDLFM) threads the bilayer. Residues 48-62 (NKFSNLFLLKNHNIE) are Mitochondrial matrix-facing. The chain crosses the membrane as a helical span at residues 63-82 (IIWTIIPIIILLIICFPSLK). Topologically, residues 83–225 (ILYLIDEIVN…YFLNWVNKQI (143 aa)) are mitochondrial intermembrane. Cu cation-binding residues include histidine 159, cysteine 194, glutamate 196, cysteine 198, histidine 202, and methionine 205. Residue glutamate 196 coordinates Mg(2+).

It belongs to the cytochrome c oxidase subunit 2 family. As to quaternary structure, component of the cytochrome c oxidase (complex IV, CIV), a multisubunit enzyme composed of a catalytic core of 3 subunits and several supernumerary subunits. The complex exists as a monomer or a dimer and forms supercomplexes (SCs) in the inner mitochondrial membrane with ubiquinol-cytochrome c oxidoreductase (cytochrome b-c1 complex, complex III, CIII). The cofactor is Cu cation.

The protein localises to the mitochondrion inner membrane. The catalysed reaction is 4 Fe(II)-[cytochrome c] + O2 + 8 H(+)(in) = 4 Fe(III)-[cytochrome c] + 2 H2O + 4 H(+)(out). Its function is as follows. Component of the cytochrome c oxidase, the last enzyme in the mitochondrial electron transport chain which drives oxidative phosphorylation. The respiratory chain contains 3 multisubunit complexes succinate dehydrogenase (complex II, CII), ubiquinol-cytochrome c oxidoreductase (cytochrome b-c1 complex, complex III, CIII) and cytochrome c oxidase (complex IV, CIV), that cooperate to transfer electrons derived from NADH and succinate to molecular oxygen, creating an electrochemical gradient over the inner membrane that drives transmembrane transport and the ATP synthase. Cytochrome c oxidase is the component of the respiratory chain that catalyzes the reduction of oxygen to water. Electrons originating from reduced cytochrome c in the intermembrane space (IMS) are transferred via the dinuclear copper A center (CU(A)) of subunit 2 and heme A of subunit 1 to the active site in subunit 1, a binuclear center (BNC) formed by heme A3 and copper B (CU(B)). The BNC reduces molecular oxygen to 2 water molecules using 4 electrons from cytochrome c in the IMS and 4 protons from the mitochondrial matrix. The polypeptide is Cytochrome c oxidase subunit 2 (COII) (Apis mellifera ligustica (Common honeybee)).